The chain runs to 248 residues: Ribosomal RNA small subunit methyltransferase J (248 aa).

S-adenosyl-L-methionine contacts are provided by residues 101-102 (RD), 117-118 (ER), 153-154 (SS), and Asp-171.

Belongs to the methyltransferase superfamily. RsmJ family.

Its subcellular location is the cytoplasm. The catalysed reaction is guanosine(1516) in 16S rRNA + S-adenosyl-L-methionine = N(2)-methylguanosine(1516) in 16S rRNA + S-adenosyl-L-homocysteine + H(+). Specifically methylates the guanosine in position 1516 of 16S rRNA. The protein is Ribosomal RNA small subunit methyltransferase J of Pectobacterium atrosepticum (strain SCRI 1043 / ATCC BAA-672) (Erwinia carotovora subsp. atroseptica).